The primary structure comprises 392 residues: Phospho-N-acetylmuramoyl-pentapeptide-transferase (392 aa).

10 consecutive transmembrane segments (helical) span residues 29–49 (AVLA…WVIG), 76–96 (TMGG…WFDL), 100–120 (FVWI…VDDW), 137–157 (YLWQ…CISE), 192–212 (AVSY…VIVG), 225–245 (GLAI…AYVT), 262–282 (SGEL…FLWF), 289–309 (VFMG…IAII), 314–334 (IVLA…MLQV), and 369–389 (QVVV…LSTL).

The protein belongs to the glycosyltransferase 4 family. MraY subfamily. Mg(2+) serves as cofactor.

The protein localises to the cell inner membrane. The catalysed reaction is UDP-N-acetyl-alpha-D-muramoyl-L-alanyl-gamma-D-glutamyl-meso-2,6-diaminopimeloyl-D-alanyl-D-alanine + di-trans,octa-cis-undecaprenyl phosphate = di-trans,octa-cis-undecaprenyl diphospho-N-acetyl-alpha-D-muramoyl-L-alanyl-D-glutamyl-meso-2,6-diaminopimeloyl-D-alanyl-D-alanine + UMP. It functions in the pathway cell wall biogenesis; peptidoglycan biosynthesis. Its function is as follows. Catalyzes the initial step of the lipid cycle reactions in the biosynthesis of the cell wall peptidoglycan: transfers peptidoglycan precursor phospho-MurNAc-pentapeptide from UDP-MurNAc-pentapeptide onto the lipid carrier undecaprenyl phosphate, yielding undecaprenyl-pyrophosphoryl-MurNAc-pentapeptide, known as lipid I. The polypeptide is Phospho-N-acetylmuramoyl-pentapeptide-transferase (Verminephrobacter eiseniae (strain EF01-2)).